The chain runs to 62 residues: Large ribosomal subunit protein bL33 (62 aa).

The protein belongs to the bacterial ribosomal protein bL33 family.

The sequence is that of Large ribosomal subunit protein bL33 from Cyanothece sp. (strain PCC 7425 / ATCC 29141).